We begin with the raw amino-acid sequence, 329 residues long: MLGSVTDFLKPRLVDIEQLSPTHAKVTLEPLERGFGHTLGNALRRILLSSMPGCAVAEVEIDGVLHEYSSKEGVQEDILEILLNLKGIAVKLEGKDEVILSLTKSGAGPVTAGDIIHGDDVVIVNPEHVICHLTGANAEISMRLRVQRGRGYVPASARLHTDDEDRPIGRLLLDAAFSPVVRIAYNVEAARVEQRTDLDKLVIDMETNGTLDPEEAIRRAATILAEQLDAFVDLRDVSVPEKKEDKPEFDPILLRPVDDLELTVRSANCLKAEAIHYIGDLVQRTEVELLKTPNLGKKSLTEIKDVLASRGLSLGMRLENWPPASLADN.

The alpha N-terminal domain (alpha-NTD) stretch occupies residues 1 to 235 (MLGSVTDFLK…EQLDAFVDLR (235 aa)). The alpha C-terminal domain (alpha-CTD) stretch occupies residues 249-329 (FDPILLRPVD…NWPPASLADN (81 aa)).

This sequence belongs to the RNA polymerase alpha chain family. As to quaternary structure, homodimer. The RNAP catalytic core consists of 2 alpha, 1 beta, 1 beta' and 1 omega subunit. When a sigma factor is associated with the core the holoenzyme is formed, which can initiate transcription.

The catalysed reaction is RNA(n) + a ribonucleoside 5'-triphosphate = RNA(n+1) + diphosphate. Functionally, DNA-dependent RNA polymerase catalyzes the transcription of DNA into RNA using the four ribonucleoside triphosphates as substrates. The polypeptide is DNA-directed RNA polymerase subunit alpha (Tolumonas auensis (strain DSM 9187 / NBRC 110442 / TA 4)).